Reading from the N-terminus, the 383-residue chain is NifS-like protein (383 aa).

Residues 58–59 (SE) and 184–186 (SIN) contribute to the pyridoxal 5'-phosphate site.

The protein belongs to the class-V pyridoxal-phosphate-dependent aminotransferase family. NifS/IscS subfamily. The cofactor is pyridoxal 5'-phosphate.

It localises to the virion. The polypeptide is NifS-like protein (African swine fever virus (strain Badajoz 1971 Vero-adapted) (Ba71V)).